The sequence spans 93 residues: Acylphosphatase (93 aa).

The Acylphosphatase-like domain maps to 5-93 (CIIAWVHGRV…EELTGFRIRY (89 aa)). Residues R20 and N38 contribute to the active site.

This sequence belongs to the acylphosphatase family.

It carries out the reaction an acyl phosphate + H2O = a carboxylate + phosphate + H(+). This is Acylphosphatase (acyP) from Citrobacter koseri (strain ATCC BAA-895 / CDC 4225-83 / SGSC4696).